Here is a 427-residue protein sequence, read N- to C-terminus: MATYNTLQDRIRVAKELLERVDKICSRQGREVEGRAKLCGKLRAELKFLQKVEAGKVVIKESHLQSTNLTHLKAIVESAESLEKVVSVLHVFAYESPDGQKQTLVVDVVANGGHTWVKSIGRKAEALHNIWQGRGQYGDKSVIRQAEDFLEASQQQPVQYSNPHIIFAFYNGVSSPMADKLKEMGISVRGDIVAVNTIEGGEEEDEEDQEGDHEDLVEEEEDGEDDNDDDSDDTDLMHTRVDRDTIVASLAFPTEVKVDVCNRVNLDITTLITYVSSLSHGNCHFTFKEVVLTEQAAQERQEKVLPRLEEFMKGKELFACQSAVEDFRVILDTLGGPGEKSRAEELLARLKVVPDQPSERTQRLVMSSKVNRRSLMIFGTGDTLRAITMTANSGFVRAAANQGVRFSVFIHQPRALTEGKEWRATPI.

A compositionally biased stretch (acidic residues) spans G200–T234. The disordered stretch occupies residues G200–L236.

Belongs to the UPF0415 family.

This Danio rerio (Zebrafish) protein is UPF0415 protein C7orf25 homolog.